The chain runs to 419 residues: 26S proteasome regulatory subunit 8 homolog B (419 aa).

Position 202–209 (202–209) interacts with ATP; sequence GPPGTGKT. Lysine 406 is covalently cross-linked (Glycyl lysine isopeptide (Lys-Gly) (interchain with G-Cter in ubiquitin)).

This sequence belongs to the AAA ATPase family. In terms of assembly, component of the 19S regulatory particle (RP/PA700) base subcomplex of the 26S proteasome. The 26S proteasome is composed of a core protease (CP), known as the 20S proteasome, capped at one or both ends by the 19S regulatory particle (RP/PA700). The RP/PA700 complex is composed of at least 17 different subunits in two subcomplexes, the base and the lid, which form the portions proximal and distal to the 20S proteolytic core, respectively.

Its subcellular location is the cytoplasm. It is found in the nucleus. In terms of biological role, the 26S proteasome is involved in the ATP-dependent degradation of ubiquitinated proteins. The regulatory (or ATPase) complex confers ATP dependency and substrate specificity to the 26S complex. In Arabidopsis thaliana (Mouse-ear cress), this protein is 26S proteasome regulatory subunit 8 homolog B (RPT6B).